The sequence spans 322 residues: Gas vesicle protein L (322 aa).

A disordered region spans residues 1–85; sequence MTEQSSGSAT…SEQATVDWST (85 aa). Residues 17 to 36 are compositionally biased toward basic and acidic residues; sequence ETAKQETGRKNEQPEERTVT. Positions 45–57 are enriched in polar residues; sequence INTTTAESETGSE. The span at 58–72 shows a compositional bias: basic and acidic residues; it reads QESKAGSEQESKAGS. Positions 73-85 are enriched in polar residues; the sequence is EQESEQATVDWST.

Belongs to the gas vesicle GvpF/GvpL family. GvpF to GvpM interact with each other in vitro, and may form multi-subunit complex(es). Interacts with GvpC, GvpN and GvpO.

It is found in the gas vesicle. Its function is as follows. Proteins GvpF to GvpM might be involved in nucleating gas vesicle formation. A minor component of the gas vesicle. Gas vesicles are small, hollow, gas filled protein structures that are found in several microbial planktonic microorganisms. They allow positioning of halobacteria at the optimal depth for growth in the poorly aerated, shallow brine pools of their habitat. Expression of a 9.5 kb mc-vac DNA fragment containing 2 divergently transcribed regions (gvpD-gvpE-gvpF-gvpG-gvpH-gvpI-gvpJ-gvpK-gvpL-gvpM and gvpA-gvpC-gvpN-gvpO) allows H.volcanii to produce gas vesicles. The protein is Gas vesicle protein L of Haloferax mediterranei (strain ATCC 33500 / DSM 1411 / JCM 8866 / NBRC 14739 / NCIMB 2177 / R-4) (Halobacterium mediterranei).